A 338-amino-acid polypeptide reads, in one-letter code: Glycerol-3-phosphate dehydrogenase [NAD(P)+] (338 aa).

The NADPH site is built by S12, W13, K34, and K110. K110, G141, and S143 together coordinate sn-glycerol 3-phosphate. Residue A145 participates in NADPH binding. Residues K196, D249, S259, R260, and N261 each coordinate sn-glycerol 3-phosphate. K196 functions as the Proton acceptor in the catalytic mechanism. R260 provides a ligand contact to NADPH. NADPH contacts are provided by V284 and E286.

The protein belongs to the NAD-dependent glycerol-3-phosphate dehydrogenase family.

It localises to the cytoplasm. The enzyme catalyses sn-glycerol 3-phosphate + NAD(+) = dihydroxyacetone phosphate + NADH + H(+). The catalysed reaction is sn-glycerol 3-phosphate + NADP(+) = dihydroxyacetone phosphate + NADPH + H(+). Its pathway is membrane lipid metabolism; glycerophospholipid metabolism. Catalyzes the reduction of the glycolytic intermediate dihydroxyacetone phosphate (DHAP) to sn-glycerol 3-phosphate (G3P), the key precursor for phospholipid synthesis. This is Glycerol-3-phosphate dehydrogenase [NAD(P)+] from Ligilactobacillus salivarius (strain UCC118) (Lactobacillus salivarius).